Here is a 133-residue protein sequence, read N- to C-terminus: Large ribosomal subunit protein bL20 (133 aa).

The protein belongs to the bacterial ribosomal protein bL20 family.

Binds directly to 23S ribosomal RNA and is necessary for the in vitro assembly process of the 50S ribosomal subunit. It is not involved in the protein synthesizing functions of that subunit. This Bartonella quintana (strain Toulouse) (Rochalimaea quintana) protein is Large ribosomal subunit protein bL20.